The chain runs to 271 residues: Ribosomal RNA small subunit methyltransferase A (271 aa).

6 residues coordinate S-adenosyl-L-methionine: Asn18, Leu20, Gly45, Glu66, Asp91, and Asn112.

This sequence belongs to the class I-like SAM-binding methyltransferase superfamily. rRNA adenine N(6)-methyltransferase family. RsmA subfamily.

The protein resides in the cytoplasm. The enzyme catalyses adenosine(1518)/adenosine(1519) in 16S rRNA + 4 S-adenosyl-L-methionine = N(6)-dimethyladenosine(1518)/N(6)-dimethyladenosine(1519) in 16S rRNA + 4 S-adenosyl-L-homocysteine + 4 H(+). Specifically dimethylates two adjacent adenosines (A1518 and A1519) in the loop of a conserved hairpin near the 3'-end of 16S rRNA in the 30S particle. May play a critical role in biogenesis of 30S subunits. In Vibrio atlanticus (strain LGP32) (Vibrio splendidus (strain Mel32)), this protein is Ribosomal RNA small subunit methyltransferase A.